Consider the following 225-residue polypeptide: Cytochrome c oxidase subunit 2 (225 aa).

The Mitochondrial intermembrane segment spans residues 1-26 (MMTWSQMSFSDMNSPIMEQMVFFHDH). Residues 27–48 (SMMIILMITILTIYMITNIMMN) form a helical membrane-spanning segment. The Mitochondrial matrix portion of the chain corresponds to 49–62 (NLLSRSMMEGQEIE). Residues 63–82 (IIWTIIPAITLIFIAIPSLH) traverse the membrane as a helical segment. Residues 83–225 (LLYLTDETFN…KNFINFINSS (143 aa)) lie on the Mitochondrial intermembrane side of the membrane. Cu cation-binding residues include histidine 160, cysteine 195, glutamate 197, cysteine 199, histidine 203, and methionine 206. Glutamate 197 is a binding site for Mg(2+).

Belongs to the cytochrome c oxidase subunit 2 family. Component of the cytochrome c oxidase (complex IV, CIV), a multisubunit enzyme composed of a catalytic core of 3 subunits and several supernumerary subunits. The complex exists as a monomer or a dimer and forms supercomplexes (SCs) in the inner mitochondrial membrane with ubiquinol-cytochrome c oxidoreductase (cytochrome b-c1 complex, complex III, CIII). Cu cation is required as a cofactor.

It localises to the mitochondrion inner membrane. The enzyme catalyses 4 Fe(II)-[cytochrome c] + O2 + 8 H(+)(in) = 4 Fe(III)-[cytochrome c] + 2 H2O + 4 H(+)(out). Its function is as follows. Component of the cytochrome c oxidase, the last enzyme in the mitochondrial electron transport chain which drives oxidative phosphorylation. The respiratory chain contains 3 multisubunit complexes succinate dehydrogenase (complex II, CII), ubiquinol-cytochrome c oxidoreductase (cytochrome b-c1 complex, complex III, CIII) and cytochrome c oxidase (complex IV, CIV), that cooperate to transfer electrons derived from NADH and succinate to molecular oxygen, creating an electrochemical gradient over the inner membrane that drives transmembrane transport and the ATP synthase. Cytochrome c oxidase is the component of the respiratory chain that catalyzes the reduction of oxygen to water. Electrons originating from reduced cytochrome c in the intermembrane space (IMS) are transferred via the dinuclear copper A center (CU(A)) of subunit 2 and heme A of subunit 1 to the active site in subunit 1, a binuclear center (BNC) formed by heme A3 and copper B (CU(B)). The BNC reduces molecular oxygen to 2 water molecules using 4 electrons from cytochrome c in the IMS and 4 protons from the mitochondrial matrix. The polypeptide is Cytochrome c oxidase subunit 2 (COII) (Rhipicephalus sanguineus (Brown dog tick)).